Consider the following 388-residue polypeptide: Dual-specificity RNA methyltransferase RlmN (388 aa).

Glu-109 serves as the catalytic Proton acceptor. In terms of domain architecture, Radical SAM core spans 115-354 (EDDRATLCVS…TIVRKTRGDD (240 aa)). The cysteines at positions 122 and 359 are disulfide-linked. [4Fe-4S] cluster is bound by residues Cys-129, Cys-133, and Cys-136. Residues 183-184 (GE), Ser-215, 237-239 (SLH), and Asn-316 contribute to the S-adenosyl-L-methionine site. The active-site S-methylcysteine intermediate is the Cys-359.

This sequence belongs to the radical SAM superfamily. RlmN family. It depends on [4Fe-4S] cluster as a cofactor.

The protein resides in the cytoplasm. It carries out the reaction adenosine(2503) in 23S rRNA + 2 reduced [2Fe-2S]-[ferredoxin] + 2 S-adenosyl-L-methionine = 2-methyladenosine(2503) in 23S rRNA + 5'-deoxyadenosine + L-methionine + 2 oxidized [2Fe-2S]-[ferredoxin] + S-adenosyl-L-homocysteine. It catalyses the reaction adenosine(37) in tRNA + 2 reduced [2Fe-2S]-[ferredoxin] + 2 S-adenosyl-L-methionine = 2-methyladenosine(37) in tRNA + 5'-deoxyadenosine + L-methionine + 2 oxidized [2Fe-2S]-[ferredoxin] + S-adenosyl-L-homocysteine. In terms of biological role, specifically methylates position 2 of adenine 2503 in 23S rRNA and position 2 of adenine 37 in tRNAs. m2A2503 modification seems to play a crucial role in the proofreading step occurring at the peptidyl transferase center and thus would serve to optimize ribosomal fidelity. The polypeptide is Dual-specificity RNA methyltransferase RlmN (Citrobacter koseri (strain ATCC BAA-895 / CDC 4225-83 / SGSC4696)).